The primary structure comprises 145 residues: Large ribosomal subunit protein uL15 (145 aa).

Residues 1 to 18 (MKLHELKYTEGSKKDVTR) show a composition bias toward basic and acidic residues. Positions 1-51 (MKLHELKYTEGSKKDVTRVGRGMASGKGKTSTRGHKGQNSRSGGGVRVGFE) are disordered. Residues 42-51 (SGGGVRVGFE) are compositionally biased toward gly residues.

It belongs to the universal ribosomal protein uL15 family. In terms of assembly, part of the 50S ribosomal subunit.

Functionally, binds to the 23S rRNA. This Mesoplasma florum (strain ATCC 33453 / NBRC 100688 / NCTC 11704 / L1) (Acholeplasma florum) protein is Large ribosomal subunit protein uL15.